The following is a 369-amino-acid chain: Glycerol-3-phosphate dehydrogenase [NAD(P)+] (369 aa).

5 residues coordinate NADPH: S6, W7, R27, R28, and K101. Sn-glycerol 3-phosphate contacts are provided by K101 and G131. A135 is a binding site for NADPH. Sn-glycerol 3-phosphate contacts are provided by K186, D239, S249, R250, and N251. K186 functions as the Proton acceptor in the catalytic mechanism. R250 serves as a coordination point for NADPH. E276 provides a ligand contact to NADPH. The disordered stretch occupies residues 312 to 369; sequence KDIAPHLTTDDEPQGERTRGERTTDDGQGQGRTSVWGSLKRAFDQLRDGGGSSRRDRP. 2 stretches are compositionally biased toward basic and acidic residues: residues 325 to 336 and 352 to 369; these read QGERTRGERTTD and RAFDQLRDGGGSSRRDRP.

It belongs to the NAD-dependent glycerol-3-phosphate dehydrogenase family.

The protein resides in the cytoplasm. It carries out the reaction sn-glycerol 3-phosphate + NAD(+) = dihydroxyacetone phosphate + NADH + H(+). The enzyme catalyses sn-glycerol 3-phosphate + NADP(+) = dihydroxyacetone phosphate + NADPH + H(+). It functions in the pathway membrane lipid metabolism; glycerophospholipid metabolism. Catalyzes the reduction of the glycolytic intermediate dihydroxyacetone phosphate (DHAP) to sn-glycerol 3-phosphate (G3P), the key precursor for phospholipid synthesis. This chain is Glycerol-3-phosphate dehydrogenase [NAD(P)+], found in Leifsonia xyli subsp. xyli (strain CTCB07).